The chain runs to 60 residues: Large ribosomal subunit protein bL32 (60 aa).

The protein belongs to the bacterial ribosomal protein bL32 family.

This Fervidobacterium nodosum (strain ATCC 35602 / DSM 5306 / Rt17-B1) protein is Large ribosomal subunit protein bL32.